A 643-amino-acid chain; its full sequence is Uromodulin (643 aa).

The signal sequence occupies residues 1-26; sequence MKCLFSPNFMWMAAVVTSWVIIPAAT. Residues 32-66 enclose the EGF-like 1 domain; sequence KSCSECHSNATCTVDGAATTCACQEGFTGDGLECV. 21 disulfide bridges follow: cysteine 34–cysteine 43, cysteine 37–cysteine 52, cysteine 54–cysteine 65, cysteine 71–cysteine 85, cysteine 79–cysteine 94, cysteine 96–cysteine 108, cysteine 114–cysteine 128, cysteine 122–cysteine 137, cysteine 139–cysteine 150, cysteine 152–cysteine 163, cysteine 157–cysteine 172, cysteine 176–cysteine 269, cysteine 197–cysteine 284, cysteine 219–cysteine 257, cysteine 225–cysteine 289, cysteine 250–cysteine 258, cysteine 299–cysteine 308, cysteine 302–cysteine 317, cysteine 319–cysteine 349, cysteine 337–cysteine 427, and cysteine 368–cysteine 391. Asparagine 40 carries an N-linked (GlcNAc...) asparagine glycan. Residues 67 to 109 enclose the EGF-like 2; calcium-binding domain; that stretch reads DLDECAVLGAHNCSATKSCVNTLGSYTCVCPEGFLLSSELGCE. A glycan (N-linked (GlcNAc...) asparagine) is linked at asparagine 78. Positions 110-151 constitute an EGF-like 3; calcium-binding domain; the sequence is DVDECAEPGLSRCHALATCINGEGNYSCVCPAGYLGDGRHCE. Residue asparagine 134 is glycosylated (N-linked (GlcNAc...) asparagine). The segment at 152 to 173 is beta hairpin; it reads CSPGSCGPGLDCVREGDALVCV. The interval 174–293 is D10C; that stretch reads DPCQVHRILD…CHLAYCTDPS (120 aa). N-linked (GlcNAc...) asparagine glycosylation occurs at asparagine 234. Asparagine 277 is a glycosylation site (N-linked (GlcNAc...) asparagine). The EGF-like 4 domain maps to 294–325; sequence SVEGTCEECRVDEDCKSDNGEWHCQCKQDFNV. Residue asparagine 324 is glycosylated (N-linked (GlcNAc...) asparagine). A ZP-N region spans residues 336-431; that stretch reads ECGVDDIKLS…RINFACSYPL (96 aa). The region spanning 336–587 is the ZP domain; sequence ECGVDDIKLS…EKCRPTCPET (252 aa). Asparagine 398 and asparagine 449 each carry an N-linked (GlcNAc...) asparagine glycan. The segment at 432–455 is flexible ZP-N/ZP-C linker; important for secretion and polymerization into filaments; it reads DMKVSLKTSLQPMVSALNISMGGT. The segment at 456–466 is internal hydrophobic patch (IHP); it reads GTFTVRMALFQ. The segment at 456-587 is ZP-C; sequence GTFTVRMALF…EKCRPTCPET (132 aa). 3 disulfide bridges follow: cysteine 508-cysteine 568, cysteine 529-cysteine 584, and cysteine 573-cysteine 580. Asparagine 515 is a glycosylation site (N-linked (GlcNAc...) asparagine). Positions 588–591 are essential for cleavage by HPN; sequence RFRS. The segment at 600–608 is external hydrophobic patch (EHP); regulates polymerization into filaments; the sequence is VLNLGPITR. Serine 621 is lipidated: GPI-anchor amidated serine. Positions 622–643 are cleaved as a propeptide — removed in mature form; sequence SLGLLQVWLPLLLSATLTLMSP.

Homodimer that then polymerizes into long filaments. The filaments can additionally assemble laterally to form a sheet. The filaments consist of a zigzag-shaped backbone with laterally protruding arms which interact with bacterial adhesin fimH. Two fimH molecules can bind to a single UMOD monomer. Post-translationally, N-glycosylated. Proteolytically cleaved at a conserved C-terminal proteolytic cleavage site to generate the secreted form found in urine. This cleavage is catalyzed by HPN.

It localises to the apical cell membrane. The protein localises to the basolateral cell membrane. The protein resides in the cell projection. Its subcellular location is the cilium membrane. It is found in the secreted. Functionally, functions in biogenesis and organization of the apical membrane of epithelial cells of the thick ascending limb of Henle's loop (TALH), where it promotes formation of complex filamentous gel-like structure that may play a role in the water barrier permeability. May serve as a receptor for binding and endocytosis of cytokines (IL-1, IL-2) and TNF. Facilitates neutrophil migration across renal epithelia. In terms of biological role, in the urine, may contribute to colloid osmotic pressure, retards passage of positively charged electrolytes, and inhibits formation of liquid containing supersaturated salts and subsequent formation of salt crystals. Protects against urinary tract infections by binding to type 1 fimbriated E.coli. Binds to bacterial adhesin fimH which mediates the stable formation of bacterial aggregates, prevents the binding of E.coli to uroplakins UPK1A and UPK1B which act as urothelial receptors for type I fimbriae, and allows for pathogen clearance through micturation. Also promotes aggregation of other bacteria including K.pneumoniae, P.aeruginosa and S.mitis and so may also protect against other uropathogens. This chain is Uromodulin (UMOD), found in Bos taurus (Bovine).